The following is a 472-amino-acid chain: Sad1-interacting factor 3 (472 aa).

Disordered regions lie at residues 1 to 47 (MSTK…PRFG) and 197 to 223 (SSGPAPDDMPSSASNHNQKHLDSDKPD). Residues 1-443 (MSTKDKLNLP…KSSADRKMNS (443 aa)) lie on the Lumenal side of the membrane. Residues 30-40 (NSESTRITPQH) show a composition bias toward polar residues. At serine 42 the chain carries Phosphoserine. Residues 444-464 (ITWIIIILISLFVIIFTLEVI) traverse the membrane as a helical segment. At 465 to 472 (LRLRWAHR) the chain is on the cytoplasmic side.

The protein belongs to the RMD1/sif2 family. As to quaternary structure, interacts with sad1.

The protein localises to the nucleus membrane. The chain is Sad1-interacting factor 3 (sif3) from Schizosaccharomyces pombe (strain 972 / ATCC 24843) (Fission yeast).